The primary structure comprises 372 residues: MFNITSQVSALNATLAQGNSCLDAEWWSWLNTIQAPFLWVLFVLAVLENIFVLSVFFLHKSSCTVAEIYLGNLAVADLILAFGLPFWAITIANNFDWLFGEVLCRMVNTMIQMNMYSSICFLMLVSIDRYLALVKTMSMGRMRGVRWAKLYSLVIWGCALLLSSPMLVFRTMKDYRDEGHNVTACLIIYPSLTWQVFTNVLLNLVGFLLPLSIITFCTVQIMQVLRNNEMQKFKEIQTERRATVLVLAVLLLFVVCWLPFQIGTFLDTLRLLGFLPGCWEHVIDLITQISSYLAYSNSCLNPLVYVIVGKRFRKKSREVYHGLCRSGGCVSEPAQSENSMGTLRTSISVDRQIHKLQDWARSSSEGTPPGLL.

Over 1–34 (MFNITSQVSALNATLAQGNSCLDAEWWSWLNTIQ) the chain is Extracellular. N-linked (GlcNAc...) asparagine glycosylation is found at asparagine 3 and asparagine 12. A helical transmembrane segment spans residues 35 to 58 (APFLWVLFVLAVLENIFVLSVFFL). Over 59–67 (HKSSCTVAE) the chain is Cytoplasmic. The helical transmembrane segment at 68-92 (IYLGNLAVADLILAFGLPFWAITIA) threads the bilayer. The Extracellular segment spans residues 93 to 105 (NNFDWLFGEVLCR). Cysteine 104 and cysteine 185 are disulfide-bonded. Residues 106-127 (MVNTMIQMNMYSSICFLMLVSI) form a helical membrane-spanning segment. Residues 128-149 (DRYLALVKTMSMGRMRGVRWAK) are Cytoplasmic-facing. Residue tyrosine 130 is modified to Phosphotyrosine. The helical transmembrane segment at 150–172 (LYSLVIWGCALLLSSPMLVFRTM) threads the bilayer. Over 173 to 195 (KDYRDEGHNVTACLIIYPSLTWQ) the chain is Extracellular. An N-linked (GlcNAc...) asparagine glycan is attached at asparagine 181. Residues 196-222 (VFTNVLLNLVGFLLPLSIITFCTVQIM) form a helical membrane-spanning segment. At 223–241 (QVLRNNEMQKFKEIQTERR) the chain is on the cytoplasmic side. A helical transmembrane segment spans residues 242–266 (ATVLVLAVLLLFVVCWLPFQIGTFL). The Extracellular portion of the chain corresponds to 267 to 284 (DTLRLLGFLPGCWEHVID). The chain crosses the membrane as a helical span at residues 285–308 (LITQISSYLAYSNSCLNPLVYVIV). The Cytoplasmic portion of the chain corresponds to 309-364 (GKRFRKKSREVYHGLCRSGGCVSEPAQSENSMGTLRTSISVDRQIHKLQDWARSSS). The residue at position 320 (tyrosine 320) is a Phosphotyrosine. Residue cysteine 324 is the site of S-palmitoyl cysteine attachment. Position 339 is a phosphoserine (serine 339). Threonine 342 is modified (phosphothreonine). Phosphoserine; by GRK6 occurs at positions 346 and 348.

This sequence belongs to the G-protein coupled receptor 1 family. Bradykinin receptor subfamily. BDKRB2 sub-subfamily. As to quaternary structure, forms a complex with PECAM1 and GNAQ. Interacts with PECAM1.

It localises to the cell membrane. Receptor for bradykinin. It is associated with G proteins that activate a phosphatidylinositol-calcium second messenger system. The protein is B2 bradykinin receptor (BDKRB2) of Cavia porcellus (Guinea pig).